The sequence spans 49 residues: Sperm protamine P1 (49 aa).

Residues 1 to 49 (MARYRCCRSHSRSRCRRRRRRSRRRRRRSCGRRRRAGYRRYTVRYRRRR) form a disordered region.

The protein belongs to the protamine P1 family. In terms of tissue distribution, testis.

It localises to the nucleus. The protein resides in the chromosome. In terms of biological role, protamines substitute for histones in the chromatin of sperm during the haploid phase of spermatogenesis. They compact sperm DNA into a highly condensed, stable and inactive complex. The chain is Sperm protamine P1 (PRM1) from Macronycteris commersonii (Commerson's roundleaf bat).